The chain runs to 447 residues: Glutamate--tRNA ligase 1 (447 aa).

Residues 10 to 20 (PSPTGMLHVGN) carry the 'HIGH' region motif. The short motif at 240–244 (KISKR) is the 'KMSKS' region element. Lys-243 contributes to the ATP binding site.

It belongs to the class-I aminoacyl-tRNA synthetase family. Glutamate--tRNA ligase type 1 subfamily. Monomer.

It is found in the cytoplasm. It catalyses the reaction tRNA(Glu) + L-glutamate + ATP = L-glutamyl-tRNA(Glu) + AMP + diphosphate. Its function is as follows. Catalyzes the attachment of glutamate to tRNA(Glu) in a two-step reaction: glutamate is first activated by ATP to form Glu-AMP and then transferred to the acceptor end of tRNA(Glu). In Rickettsia felis (strain ATCC VR-1525 / URRWXCal2) (Rickettsia azadi), this protein is Glutamate--tRNA ligase 1.